Consider the following 100-residue polypeptide: Small ribosomal subunit protein uS14c (100 aa).

The protein belongs to the universal ribosomal protein uS14 family. Part of the 30S ribosomal subunit.

It is found in the plastid. The protein resides in the chloroplast. In terms of biological role, binds 16S rRNA, required for the assembly of 30S particles. This Cycas taitungensis (Prince sago) protein is Small ribosomal subunit protein uS14c.